Here is a 389-residue protein sequence, read N- to C-terminus: Sinapine esterase (389 aa).

Positions 1–25 (MASSLKKLITSFLLFFFYTIIVASS) are cleaved as a signal peptide. Ser41 (nucleophile) is an active-site residue. Residues Asn104, Asn137, and Asn320 are each glycosylated (N-linked (GlcNAc...) asparagine). Catalysis depends on residues Asp345 and His348. Asn372 and Asn383 each carry an N-linked (GlcNAc...) asparagine glycan.

The protein belongs to the 'GDSL' lipolytic enzyme family. Expressed in most tissues or organs of the mature seedlings. Not expressed in roots of mature seedlings.

The protein resides in the secreted. It catalyses the reaction O-sinapoylcholine + H2O = (E)-sinapate + choline + H(+). Inhibited by PMSF. Functionally, sinapine esterase that catalyzes that hydrolysis of sinapine, releasing choline and sinapate. Sinapine (O-sinapoylcholine) is the predominant phenolic compound in a complex group of sinapate esters in seeds of oilseed rape (B.napus). Sinapine has antinutritive activity and prevents the use of seed protein for food and feed. Shows broad substrate specificity towards various other choline esters, including phosphatidylcholine. This chain is Sinapine esterase, found in Brassica napus (Rape).